A 359-amino-acid polypeptide reads, in one-letter code: Nicotinate-nucleotide--dimethylbenzimidazole phosphoribosyltransferase (359 aa).

E318 acts as the Proton acceptor in catalysis.

It belongs to the CobT family. In terms of assembly, homodimer.

It catalyses the reaction 5,6-dimethylbenzimidazole + nicotinate beta-D-ribonucleotide = alpha-ribazole 5'-phosphate + nicotinate + H(+). Its pathway is nucleoside biosynthesis; alpha-ribazole biosynthesis; alpha-ribazole from 5,6-dimethylbenzimidazole: step 1/2. Catalyzes the synthesis of alpha-ribazole-5'-phosphate from nicotinate mononucleotide (NAMN) and 5,6-dimethylbenzimidazole (DMB). This Escherichia coli (strain SMS-3-5 / SECEC) protein is Nicotinate-nucleotide--dimethylbenzimidazole phosphoribosyltransferase.